The sequence spans 607 residues: Aspartate--tRNA(Asp/Asn) ligase (607 aa).

E168 is a binding site for L-aspartate. Residues 192 to 195 (QLFK) are aspartate. R214 contacts L-aspartate. Residues 214-216 (RDE) and Q223 contribute to the ATP site. H449 serves as a coordination point for L-aspartate. Position 483 (E483) interacts with ATP. Residue R490 coordinates L-aspartate. 535 to 538 (GWDR) serves as a coordination point for ATP. The interval 578–607 (LEAGVDARPKPEARAQAGTAGPAAPVADPT) is disordered. The span at 580–590 (AGVDARPKPEA) shows a compositional bias: basic and acidic residues. Residues 591–607 (RAQAGTAGPAAPVADPT) show a composition bias toward low complexity.

Belongs to the class-II aminoacyl-tRNA synthetase family. Type 1 subfamily. Homodimer.

Its subcellular location is the cytoplasm. It catalyses the reaction tRNA(Asx) + L-aspartate + ATP = L-aspartyl-tRNA(Asx) + AMP + diphosphate. Its function is as follows. Aspartyl-tRNA synthetase with relaxed tRNA specificity since it is able to aspartylate not only its cognate tRNA(Asp) but also tRNA(Asn). Reaction proceeds in two steps: L-aspartate is first activated by ATP to form Asp-AMP and then transferred to the acceptor end of tRNA(Asp/Asn). The polypeptide is Aspartate--tRNA(Asp/Asn) ligase (Salinispora tropica (strain ATCC BAA-916 / DSM 44818 / JCM 13857 / NBRC 105044 / CNB-440)).